The primary structure comprises 452 residues: Transcription factor AP-2-delta (452 aa).

Ser-239 is subject to Phosphoserine; by PKA. The H-S-H (helix-span-helix), dimerization stretch occupies residues 280–410 (RRKAANVTLL…VLSEMLNYLE (131 aa)). Residues 416–452 (KNGGAADSGQGHANSEKAPLRKASEAAVKEGKTEKTD) form a disordered region. Residues 429–452 (NSEKAPLRKASEAAVKEGKTEKTD) are compositionally biased toward basic and acidic residues.

This sequence belongs to the AP-2 family. Binds DNA as a dimer. Can form homodimers or heterodimers with other AP-2 family members. In terms of tissue distribution, expressed in both embryonic and newborn brain.

The protein resides in the nucleus. Sequence-specific DNA-binding protein that interacts with inducible viral and cellular enhancer elements to regulate transcription of selected genes. AP-2 factors bind to the consensus sequence 5'-GCCNNNGGC-3' and activate genes involved in a large spectrum of important biological functions including proper eye, face, body wall, limb and neural tube development. They also suppress a number of genes including MCAM/MUC18, C/EBP alpha and MYC. The chain is Transcription factor AP-2-delta (Tfap2d) from Mus musculus (Mouse).